The chain runs to 122 residues: LYR motif-containing protein 1 (122 aa).

It belongs to the complex I LYR family.

In terms of biological role, may promote cell proliferation and inhibition of apoptosis of preadipocytes. This Mus musculus (Mouse) protein is LYR motif-containing protein 1 (Lyrm1).